The chain runs to 345 residues: Flotillin-like protein FloA 1 (345 aa).

Residues 26-46 traverse the membrane as a helical segment; it reads LLLLVGVFLALFFAAVLGFFF.

It belongs to the flotillin-like FloA family. In terms of assembly, homooligomerizes.

It localises to the cell membrane. Its subcellular location is the membrane raft. Functionally, found in functional membrane microdomains (FMM) that may be equivalent to eukaryotic membrane rafts. FMMs are highly dynamic and increase in number as cells age. Flotillins are thought to be important factors in membrane fluidity. The sequence is that of Flotillin-like protein FloA 1 from Rhodopirellula baltica (strain DSM 10527 / NCIMB 13988 / SH1).